A 55-amino-acid polypeptide reads, in one-letter code: Large ribosomal subunit protein bL32c (55 aa).

This sequence belongs to the bacterial ribosomal protein bL32 family.

Its subcellular location is the plastid. It localises to the chloroplast. The protein is Large ribosomal subunit protein bL32c of Nicotiana sylvestris (Wood tobacco).